The sequence spans 691 residues: DNA ligase (691 aa).

NAD(+)-binding positions include 41 to 45 (DAEYD), 90 to 91 (SL), and Glu130. The active-site N6-AMP-lysine intermediate is Lys132. Residues Arg153, Glu190, Lys307, and Lys331 each coordinate NAD(+). Positions 425, 428, 443, and 449 each coordinate Zn(2+). The BRCT domain maps to 610–691 (APQGVLAGKT…LHQLLEGNTQ (82 aa)).

The protein belongs to the NAD-dependent DNA ligase family. LigA subfamily. It depends on Mg(2+) as a cofactor. The cofactor is Mn(2+).

It catalyses the reaction NAD(+) + (deoxyribonucleotide)n-3'-hydroxyl + 5'-phospho-(deoxyribonucleotide)m = (deoxyribonucleotide)n+m + AMP + beta-nicotinamide D-nucleotide.. DNA ligase that catalyzes the formation of phosphodiester linkages between 5'-phosphoryl and 3'-hydroxyl groups in double-stranded DNA using NAD as a coenzyme and as the energy source for the reaction. It is essential for DNA replication and repair of damaged DNA. The polypeptide is DNA ligase (Burkholderia vietnamiensis (strain G4 / LMG 22486) (Burkholderia cepacia (strain R1808))).